A 278-amino-acid chain; its full sequence is Small ribosomal subunit protein uS2 (278 aa).

Positions 235–278 (AEAAEEAPKRERKAKAAVKKERTKKEDDDALNANVAGKFAKDEE) are disordered. Basic and acidic residues predominate over residues 252-261 (VKKERTKKED).

The protein belongs to the universal ribosomal protein uS2 family.

In Parabacteroides distasonis (strain ATCC 8503 / DSM 20701 / CIP 104284 / JCM 5825 / NCTC 11152), this protein is Small ribosomal subunit protein uS2.